The primary structure comprises 187 residues: Peptidyl-tRNA hydrolase (187 aa).

Tyr15 is a binding site for tRNA. His20 serves as the catalytic Proton acceptor. Residues Phe65, Asn67, and Asn113 each contribute to the tRNA site.

The protein belongs to the PTH family. In terms of assembly, monomer.

The protein resides in the cytoplasm. The enzyme catalyses an N-acyl-L-alpha-aminoacyl-tRNA + H2O = an N-acyl-L-amino acid + a tRNA + H(+). Hydrolyzes ribosome-free peptidyl-tRNAs (with 1 or more amino acids incorporated), which drop off the ribosome during protein synthesis, or as a result of ribosome stalling. In terms of biological role, catalyzes the release of premature peptidyl moieties from peptidyl-tRNA molecules trapped in stalled 50S ribosomal subunits, and thus maintains levels of free tRNAs and 50S ribosomes. This chain is Peptidyl-tRNA hydrolase, found in Elusimicrobium minutum (strain Pei191).